Here is a 789-residue protein sequence, read N- to C-terminus: MHKHIRKAAVLGSGVMGSGIAAHLANIGIPVLLLDIVPNDLTKEEEKKGLTKDSSEVRSRLSRQAMKKLLKQKPAPLTSAKNTSYITPGNLEDDAEKLKEADWIIEVVVENLEVKKKIFALVDEHRKTGSIVSSNTSGISVQEMAEGRSDDFKAHFLGTHFFNPARYLKLLEIIPIKETDPDILKFMTAFGENVLGKGVVTAKDTPNFIANRIGTYGLLVTVQEMLKGGYQVGEVDSITGPLIGRPKSATFRTLDVVGLDTFAHVARNVYDKADGDEKEVFRIPSFMNDMLEKGWIGSKAGQGFYKKEGKTIYELDPVTLTYGERTKMKSPALEAAKQAKGTKAKMKALIYSDDRAGRLLWNITSQTLLYSAELLGEIADDIHAIDQAMKWGFGWELGPFEMWDAIGLKQSAEKLEQLGADMPGWIKEMLDKGNETFYIKENGTVFYYDRGEYRAVKENKKRIHLQALKETKGVIAKNSGASLIDLGDDVALLEFHSKSNAIGLDIIQMIHKGLEETERNYKGLVIGNQGKNFCVGANLAMILMEVQDDNFLEVDFVIRRFQETMMKIKYSAKPVVAAPFGMTLGGGTEACLPAARIQAASEAYMGLVESGVGLIPGGGGNKELYINHLRRGHDPMNAAMKTFETIAMAKVSASAQEAREMNILKETDQISVNQDHLLYDAKQLAASLYDTGWRPPVKEKVKVPGETGYAALLLGAEQMKLSGYISEHDFKIAKKLAYVIAGGKVPFGTEVDEEYLLEIEREAFLSLSGEAKSQARMQHMLVKGKPLRN.

It belongs to the 3-hydroxyacyl-CoA dehydrogenase family.

The enzyme catalyses a (3S)-3-hydroxyacyl-CoA + NAD(+) = a 3-oxoacyl-CoA + NADH + H(+). It participates in lipid metabolism; fatty acid beta-oxidation. In terms of biological role, involved in the degradation of long-chain fatty acids. The polypeptide is Probable 3-hydroxyacyl-CoA dehydrogenase (fadN) (Bacillus subtilis (strain 168)).